The sequence spans 103 residues: Large ribosomal subunit protein uL24 (103 aa).

The protein belongs to the universal ribosomal protein uL24 family. In terms of assembly, part of the 50S ribosomal subunit.

One of two assembly initiator proteins, it binds directly to the 5'-end of the 23S rRNA, where it nucleates assembly of the 50S subunit. In terms of biological role, one of the proteins that surrounds the polypeptide exit tunnel on the outside of the subunit. The chain is Large ribosomal subunit protein uL24 from Actinobacillus pleuropneumoniae serotype 5b (strain L20).